Consider the following 175-residue polypeptide: Large ribosomal subunit protein uL16 (175 aa).

It belongs to the universal ribosomal protein uL16 family.

The chain is Large ribosomal subunit protein uL16 from Metallosphaera sedula (strain ATCC 51363 / DSM 5348 / JCM 9185 / NBRC 15509 / TH2).